A 248-amino-acid chain; its full sequence is Granulin (248 aa).

It belongs to the polyhedrin family.

Its function is as follows. Component of the virus occlusion bodies, which are large proteinaceous structures, that protect the virus from the outside environment for extended periods until they are ingested by insect larvae. This chain is Granulin, found in Adoxophyes orana granulovirus (AoGV).